We begin with the raw amino-acid sequence, 82 residues long: uncharacterized protein (82 aa).

This is an uncharacterized protein from Archaeoglobus fulgidus (strain ATCC 49558 / DSM 4304 / JCM 9628 / NBRC 100126 / VC-16).